The chain runs to 323 residues: Sphingolipid delta(4)-desaturase DES1 (323 aa).

G2 is lipidated: N-myristoyl glycine. A run of 2 helical transmembrane segments spans residues 41–61 (HNLI…FYLV) and 68–88 (WVIF…TLAI). Residues 89-93 (HEISH) carry the Histidine box-1 motif. A helical membrane pass occupies residues 104-124 (WNRWFGMFANLSLGVPYSISF). The Histidine box-2 signature appears at 128–132 (HMDHH). The next 3 membrane-spanning stretches (helical) occupy residues 152–172 (FFCT…FYAF), 184–204 (YLEI…YYVF), and 209–229 (LVYM…SGHF). The short motif at 259-263 (HNEHH) is the Histidine box-3 element. S307 is modified (phosphoserine).

This sequence belongs to the fatty acid desaturase type 1 family. DEGS subfamily. Interacts with RLBP1; the interaction increases synthesis of chromophore-precursors by DEGS1. Myristoylation can target the enzyme to the mitochondria leading to an increase in ceramide levels. As to expression, detected in testis. Detected in pachytene spermatocytes and round spermatids. Expressed in retina and retinal pigment epithelium by Mueller cells (at protein level).

The protein localises to the mitochondrion membrane. Its subcellular location is the endoplasmic reticulum membrane. It catalyses the reaction an N-acylsphinganine + 2 Fe(II)-[cytochrome b5] + O2 + 2 H(+) = an N-acylsphing-4-enine + 2 Fe(III)-[cytochrome b5] + 2 H2O. It carries out the reaction all-trans-retinol = 11-cis-retinol. The enzyme catalyses all-trans-retinol = 9-cis-retinol. The catalysed reaction is all-trans-retinol = 13-cis-retinol. It catalyses the reaction 11-cis-retinol = 13-cis-retinol. It carries out the reaction 11-cis-retinol = 9-cis-retinol. Has sphingolipid-delta-4-desaturase activity. Converts D-erythro-sphinganine to D-erythro-sphingosine (E-sphing-4-enine). Catalyzes the equilibrium isomerization of retinols. This chain is Sphingolipid delta(4)-desaturase DES1, found in Mus musculus (Mouse).